An 87-amino-acid chain; its full sequence is Phosphoribosyl-ATP pyrophosphatase (87 aa).

It belongs to the PRA-PH family.

The protein localises to the cytoplasm. It carries out the reaction 1-(5-phospho-beta-D-ribosyl)-ATP + H2O = 1-(5-phospho-beta-D-ribosyl)-5'-AMP + diphosphate + H(+). Its pathway is amino-acid biosynthesis; L-histidine biosynthesis; L-histidine from 5-phospho-alpha-D-ribose 1-diphosphate: step 2/9. The sequence is that of Phosphoribosyl-ATP pyrophosphatase from Bifidobacterium adolescentis (strain ATCC 15703 / DSM 20083 / NCTC 11814 / E194a).